Consider the following 474-residue polypeptide: Proline--tRNA ligase (474 aa).

This sequence belongs to the class-II aminoacyl-tRNA synthetase family. ProS type 3 subfamily. As to quaternary structure, homodimer.

It localises to the cytoplasm. The enzyme catalyses tRNA(Pro) + L-proline + ATP = L-prolyl-tRNA(Pro) + AMP + diphosphate. Functionally, catalyzes the attachment of proline to tRNA(Pro) in a two-step reaction: proline is first activated by ATP to form Pro-AMP and then transferred to the acceptor end of tRNA(Pro). This chain is Proline--tRNA ligase, found in Phytoplasma australiense.